Consider the following 319-residue polypeptide: Lambda-crystallin homolog (319 aa).

An N-acetylalanine modification is found at Ala-2. Position 3 is a phosphoserine (Ser-3). Residues 16–17 (VI), Asp-36, Glu-97, and Lys-102 contribute to the NAD(+) site. Ser-111 carries the phosphoserine modification.

Belongs to the 3-hydroxyacyl-CoA dehydrogenase family. As to quaternary structure, homodimer. In terms of tissue distribution, widely expressed, with highest levels in liver and kidney.

The protein localises to the cytoplasm. The catalysed reaction is L-gulonate + NAD(+) = 3-dehydro-L-gulonate + NADH + H(+). With respect to regulation, inhibited by malonate. In terms of biological role, has high L-gulonate 3-dehydrogenase activity. It also exhibits low dehydrogenase activity toward L-3-hydroxybutyrate (HBA) and L-threonate. The protein is Lambda-crystallin homolog (CRYL1) of Homo sapiens (Human).